The sequence spans 238 residues: Small ribosomal subunit protein uS2 (238 aa).

The protein belongs to the universal ribosomal protein uS2 family.

The polypeptide is Small ribosomal subunit protein uS2 (Actinobacillus pleuropneumoniae serotype 5b (strain L20)).